The following is a 324-amino-acid chain: R2-like ligand binding oxidase (324 aa).

The Mn(2+) site is built by Glu79, Glu112, and His115. The segment at residues Val82–Tyr173 is a cross-link (3-(O4'-tyrosyl)-valine (Val-Tyr)). Glu112 is a Fe cation binding site. 3 residues coordinate Fe cation: Glu178, Glu213, and His216. The tract at residues Pro304–Gly324 is disordered. Residues Leu307–Ala318 show a composition bias toward basic and acidic residues.

This sequence belongs to the ribonucleoside diphosphate reductase small chain family. R2-like ligand binding oxidase subfamily. In terms of assembly, homodimer. The cofactor is Fe cation. It depends on Mn(2+) as a cofactor.

Functionally, probable oxidase. The protein is R2-like ligand binding oxidase of Rhodococcus jostii (strain RHA1).